A 471-amino-acid chain; its full sequence is Indole-3-acetate beta-glucosyltransferase (471 aa).

Residue histidine 15 is the Proton acceptor of the active site. An an anthocyanidin-binding site is contributed by histidine 15. Aspartate 107 functions as the Charge relay in the catalytic mechanism. UDP-alpha-D-glucose-binding residues include threonine 129, glutamine 344, histidine 359, tryptophan 362, asparagine 363, serine 364, glutamate 367, aspartate 383, and glutamine 384.

It belongs to the UDP-glycosyltransferase family.

It catalyses the reaction (indol-3-yl)acetate + UDP-alpha-D-glucose = 1-O-(indol-3-ylacetyl)-beta-D-glucose + UDP. The protein operates within plant hormone metabolism; auxin conjugation. This chain is Indole-3-acetate beta-glucosyltransferase (IAGLU), found in Zea mays (Maize).